A 300-amino-acid chain; its full sequence is Bifunctional protein FolD 1 (300 aa).

NADP(+)-binding positions include 166–168 (GRS), serine 191, and isoleucine 232.

It belongs to the tetrahydrofolate dehydrogenase/cyclohydrolase family. As to quaternary structure, homodimer.

The enzyme catalyses (6R)-5,10-methylene-5,6,7,8-tetrahydrofolate + NADP(+) = (6R)-5,10-methenyltetrahydrofolate + NADPH. It catalyses the reaction (6R)-5,10-methenyltetrahydrofolate + H2O = (6R)-10-formyltetrahydrofolate + H(+). The protein operates within one-carbon metabolism; tetrahydrofolate interconversion. Its function is as follows. Catalyzes the oxidation of 5,10-methylenetetrahydrofolate to 5,10-methenyltetrahydrofolate and then the hydrolysis of 5,10-methenyltetrahydrofolate to 10-formyltetrahydrofolate. This Roseobacter denitrificans (strain ATCC 33942 / OCh 114) (Erythrobacter sp. (strain OCh 114)) protein is Bifunctional protein FolD 1.